A 53-amino-acid polypeptide reads, in one-letter code: Large ribosomal subunit protein eL40 (53 aa).

This sequence belongs to the eukaryotic ribosomal protein eL40 family.

The sequence is that of Large ribosomal subunit protein eL40 from Pyrobaculum islandicum (strain DSM 4184 / JCM 9189 / GEO3).